A 137-amino-acid polypeptide reads, in one-letter code: ATP synthase epsilon chain, sodium ion specific (137 aa).

This sequence belongs to the ATPase epsilon chain family. F-type ATPases have 2 components, CF(1) - the catalytic core - and CF(0) - the membrane proton channel. CF(1) has five subunits: alpha(3), beta(3), gamma(1), delta(1), epsilon(1). CF(0) has three main subunits: a, b and c.

It localises to the cell inner membrane. Its function is as follows. Produces ATP from ADP in the presence of a sodium gradient across the membrane. This Propionigenium modestum protein is ATP synthase epsilon chain, sodium ion specific (atpC).